The chain runs to 652 residues: Na(+)/H(+) antiporter NhaA 1 (652 aa).

A na(+)/H(+) antiporter NhaA region spans residues 1 to 427 (MTGELPRGRR…VGASLTTWLV (427 aa)). The next 11 membrane-spanning stretches (helical) occupy residues 27–47 (AFLH…VVAL), 78–98 (LRYW…GLEV), 114–134 (TLPL…YLAF), 142–162 (VGWG…LAVL), 173–193 (FLLT…AIAY), 200–220 (TALF…AAGG), 227–247 (LLLG…PVVV), 312–332 (LIVP…ELLA), 343–363 (VLFA…MLVA), 376–396 (WAAI…ALLI), and 411–431 (IGIL…FRLA). The 196-residue stretch at 428 to 623 (FRLAARLPPA…LSAAVTSAFA (196 aa)) folds into the Thioredoxin domain. Residues 626–652 (RLRPRDDREPDRRREVGSEQPDEEPGT) form a disordered region. Residues 628-642 (RPRDDREPDRRREVG) are compositionally biased toward basic and acidic residues.

This sequence in the N-terminal section; belongs to the NhaA Na(+)/H(+) (TC 2.A.33) antiporter family.

It is found in the cell membrane. The enzyme catalyses Na(+)(in) + 2 H(+)(out) = Na(+)(out) + 2 H(+)(in). In terms of biological role, na(+)/H(+) antiporter that extrudes sodium in exchange for external protons. In Salinispora arenicola (strain CNS-205), this protein is Na(+)/H(+) antiporter NhaA 1.